We begin with the raw amino-acid sequence, 176 residues long: ATP synthase subunit delta (176 aa).

The protein belongs to the ATPase delta chain family. As to quaternary structure, F-type ATPases have 2 components, F(1) - the catalytic core - and F(0) - the membrane proton channel. F(1) has five subunits: alpha(3), beta(3), gamma(1), delta(1), epsilon(1). F(0) has three main subunits: a(1), b(2) and c(10-14). The alpha and beta chains form an alternating ring which encloses part of the gamma chain. F(1) is attached to F(0) by a central stalk formed by the gamma and epsilon chains, while a peripheral stalk is formed by the delta and b chains.

It is found in the cell inner membrane. In terms of biological role, f(1)F(0) ATP synthase produces ATP from ADP in the presence of a proton or sodium gradient. F-type ATPases consist of two structural domains, F(1) containing the extramembraneous catalytic core and F(0) containing the membrane proton channel, linked together by a central stalk and a peripheral stalk. During catalysis, ATP synthesis in the catalytic domain of F(1) is coupled via a rotary mechanism of the central stalk subunits to proton translocation. Functionally, this protein is part of the stalk that links CF(0) to CF(1). It either transmits conformational changes from CF(0) to CF(1) or is implicated in proton conduction. The chain is ATP synthase subunit delta from Campylobacter hominis (strain ATCC BAA-381 / DSM 21671 / CCUG 45161 / LMG 19568 / NCTC 13146 / CH001A).